The sequence spans 1141 residues: DNA-directed RNA polymerase subunit beta (1141 aa).

Belongs to the RNA polymerase beta chain family. As to quaternary structure, the RNAP catalytic core consists of 2 alpha, 1 beta, 1 beta' and 1 omega subunit. When a sigma factor is associated with the core the holoenzyme is formed, which can initiate transcription.

It catalyses the reaction RNA(n) + a ribonucleoside 5'-triphosphate = RNA(n+1) + diphosphate. DNA-dependent RNA polymerase catalyzes the transcription of DNA into RNA using the four ribonucleoside triphosphates as substrates. The chain is DNA-directed RNA polymerase subunit beta from Frankia casuarinae (strain DSM 45818 / CECT 9043 / HFP020203 / CcI3).